A 1530-amino-acid chain; its full sequence is Regulating synaptic membrane exocytosis protein 2 (1530 aa).

Residues methionine 1 to glutamate 34 form a disordered region. Positions arginine 10–glutamate 25 are enriched in pro residues. Residues methionine 26 to serine 194 form the RabBD domain. The segment at lysine 126–glutamate 182 adopts an FYVE-type zinc-finger fold. Cysteine 132, cysteine 135, cysteine 148, cysteine 151, cysteine 156, cysteine 159, cysteine 174, and cysteine 177 together coordinate Zn(2+). Disordered regions lie at residues glycine 195–lysine 608 and serine 632–threonine 655. Basic and acidic residues-rich tracts occupy residues leucine 210–glutamate 225, glutamate 327–arginine 338, arginine 357–serine 375, glutamate 391–aspartate 410, and glutamate 419–alanine 443. Serine 409 is modified (phosphoserine). A compositionally biased stretch (polar residues) spans alanine 458–serine 472. Basic and acidic residues predominate over residues aspartate 484–aspartate 501. A compositionally biased stretch (polar residues) spans arginine 519–serine 530. The span at arginine 537–lysine 546 shows a compositional bias: basic residues. A compositionally biased stretch (acidic residues) spans serine 567–serine 577. Basic and acidic residues-rich tracts occupy residues valine 578–serine 592 and asparagine 643–proline 653. Residues aspartate 677 to arginine 763 enclose the PDZ domain. At threonine 698 the chain carries Phosphothreonine. Residues isoleucine 771 to methionine 802 form a disordered region. A phosphoserine mark is found at serine 800 and serine 803. The 124-residue stretch at leucine 814–tyrosine 937 folds into the C2 1 domain. 6 disordered regions span residues proline 948–serine 982, leucine 1003–alanine 1122, arginine 1130–glutamine 1149, lysine 1154–serine 1187, serine 1242–lysine 1263, and lysine 1282–threonine 1307. The span at leucine 1003–glycine 1024 shows a compositional bias: polar residues. The span at arginine 1067–histidine 1086 shows a compositional bias: basic and acidic residues. Positions arginine 1088–glycine 1101 are enriched in polar residues. Serine 1095 is modified (phosphoserine). Residues lysine 1154–alanine 1165 are compositionally biased toward basic and acidic residues. Serine 1175 carries the post-translational modification Phosphoserine. The span at serine 1178 to serine 1187 shows a compositional bias: low complexity. Serine 1251 is modified (phosphoserine). The C2 2 domain occupies alanine 1376–phenylalanine 1494. Phosphoserine occurs at positions 1515 and 1518.

In terms of assembly, interacts with TSPOAP1 and RIMBP2. Interacts with PPFIA3 and PPFIA4. Interacts via its zinc finger with the first C2 domain of UNC13A. Forms a complex consisting of UNC13A, RIMS2 and RAB3A. Heterodimer with PCLO. Part of a ternary complex involving PCLO and EPAC2. Interacts with RAB3A and RAB3B that have been activated by GTP-binding. Interacts with RAB3C, RAB3D and RAB26. In terms of tissue distribution, detected in testis, pituitary and an insulinoma cell line. Detected at low levels in cerebellar cortex.

The protein localises to the synapse. The protein resides in the synaptosome. Its function is as follows. Rab effector involved in exocytosis. May act as scaffold protein. Plays a role in dendrite formation by melanocytes. This is Regulating synaptic membrane exocytosis protein 2 (Rims2) from Mus musculus (Mouse).